Reading from the N-terminus, the 274-residue chain is Large ribosomal subunit protein uL2 (274 aa).

Disordered stretches follow at residues 28–54 (KPYA…TRHI) and 221–274 (RGTA…RTKK). Residues 39 to 49 (KTGGRNNNGRI) are compositionally biased toward polar residues.

This sequence belongs to the universal ribosomal protein uL2 family. As to quaternary structure, part of the 50S ribosomal subunit. Forms a bridge to the 30S subunit in the 70S ribosome.

One of the primary rRNA binding proteins. Required for association of the 30S and 50S subunits to form the 70S ribosome, for tRNA binding and peptide bond formation. It has been suggested to have peptidyltransferase activity; this is somewhat controversial. Makes several contacts with the 16S rRNA in the 70S ribosome. The polypeptide is Large ribosomal subunit protein uL2 (Photorhabdus laumondii subsp. laumondii (strain DSM 15139 / CIP 105565 / TT01) (Photorhabdus luminescens subsp. laumondii)).